We begin with the raw amino-acid sequence, 224 residues long: Oxygen-evolving enhancer protein 3-1, chloroplastic (224 aa).

Residues 1–44 constitute a chloroplast transit peptide; sequence MASMGGLHGASPAVLEGSLKINGSSRLNGSGRVAVAQRSRLVVR. A thylakoid-targeting transit peptide spans 45–75; it reads AQQSEETSRRSVIGLVAAGLAGGSFVQAVLA. Thr-189 carries the post-translational modification Phosphothreonine. Tyr-209 is modified (phosphotyrosine). Thr-212 carries the phosphothreonine modification.

It belongs to the PsbQ family. Expressed in green tissue, with high steady-state mRNA levels in leaves. Not expressed in roots.

The protein localises to the plastid. Its subcellular location is the chloroplast thylakoid membrane. Its function is as follows. Required for photosystem II assembly/stability and photoautotrophic growth under low light conditions. This Arabidopsis thaliana (Mouse-ear cress) protein is Oxygen-evolving enhancer protein 3-1, chloroplastic (PSBQ1).